The primary structure comprises 311 residues: Methionyl-tRNA formyltransferase (311 aa).

A (6S)-5,6,7,8-tetrahydrofolate-binding site is contributed by 108–111 (SILP).

This sequence belongs to the Fmt family.

The catalysed reaction is L-methionyl-tRNA(fMet) + (6R)-10-formyltetrahydrofolate = N-formyl-L-methionyl-tRNA(fMet) + (6S)-5,6,7,8-tetrahydrofolate + H(+). In terms of biological role, attaches a formyl group to the free amino group of methionyl-tRNA(fMet). The formyl group appears to play a dual role in the initiator identity of N-formylmethionyl-tRNA by promoting its recognition by IF2 and preventing the misappropriation of this tRNA by the elongation apparatus. This chain is Methionyl-tRNA formyltransferase, found in Sorangium cellulosum (strain So ce56) (Polyangium cellulosum (strain So ce56)).